The chain runs to 398 residues: Immunoglobulin heavy constant alpha 1 (398 aa).

Topologically, residues 1-364 (ASPTSPKVFP…TPGANLWPTT (364 aa)) are extracellular. Residues 6–98 (PKVFPLSLCS…HYTNPSQDVT (93 aa)) form the Ig-like 1 domain. Intrachain disulfides connect Cys-26/Cys-85 and Cys-77/Cys-101. Residues 96 to 122 (DVTVPCPVPSTPPTPSPSTPPTPSPSC) form a disordered region. Over residues 101 to 119 (CPVPSTPPTPSPSTPPTPS) the composition is skewed to pro residues. O-linked (GalNAc...) serine glycosylation occurs at Ser-105. Thr-106 and Thr-109 each carry an O-linked (GalNAc...) threonine glycan. Ser-111 and Ser-113 each carry an O-linked (GalNAc...) serine glycan. Residues Thr-114 and Thr-117 are each glycosylated (O-linked (GalNAc...) threonine). Ser-119 and Ser-121 each carry an O-linked (GalNAc...) serine glycan. Intrachain disulfides connect Cys-123-Cys-180, Cys-147-Cys-204, and Cys-250-Cys-313. 2 consecutive Ig-like domains span residues 125–220 (PRLS…ATLS) and 228–330 (PEVH…KTID). A glycan (N-linked (GlcNAc...) (complex) asparagine) is linked at Asn-144. N-linked (GlcNAc...) (complex) asparagine glycosylation occurs at Pro-340. Residue Glu-352 coordinates 3-hydroxy-L-kynurenine. Residues 365–383 (ITFLTLFLLSLFYSTALTV) traverse the membrane as a helical segment. Topologically, residues 384 to 398 (TSVRGPSGNREGPQY) are cytoplasmic.

As to quaternary structure, immunoglobulins are composed of two identical heavy chains and two identical light chains; disulfide-linked. Monomeric or polymeric. Part of the secretory IgA (sIgA) complex that consists of two, four or five IgA monomers, and two additional non-Ig polypeptides, namely the JCHAIN and the secretory component (the proteolytic product of PIGR). 3-Hydroxykynurenine, an oxidized tryptophan metabolite that is common in biological fluids, reacts with alpha-1-microglobulin to form heterogeneous polycyclic chromophores including hydroxanthommatin. The chromophore reacts with accessible cysteines forming non-reducible thioether cross-links with Ig alpha-1 chain C region Cys-352. Post-translationally, N- and O-glycosylated. N-glycan at Asn-144: Hex5HexNAc4.

It localises to the secreted. The protein localises to the cell membrane. Its function is as follows. Constant region of immunoglobulin heavy chains. Immunoglobulins, also known as antibodies, are membrane-bound or secreted glycoproteins produced by B lymphocytes. In the recognition phase of humoral immunity, the membrane-bound immunoglobulins serve as receptors which, upon binding of a specific antigen, trigger the clonal expansion and differentiation of B lymphocytes into immunoglobulins-secreting plasma cells. Secreted immunoglobulins mediate the effector phase of humoral immunity, which results in the elimination of bound antigens. The antigen binding site is formed by the variable domain of one heavy chain, together with that of its associated light chain. Thus, each immunoglobulin has two antigen binding sites with remarkable affinity for a particular antigen. The variable domains are assembled by a process called V-(D)-J rearrangement and can then be subjected to somatic hypermutations which, after exposure to antigen and selection, allow affinity maturation for a particular antigen. Ig alpha is the major immunoglobulin class in body secretions. This is Immunoglobulin heavy constant alpha 1 from Homo sapiens (Human).